Consider the following 135-residue polypeptide: Probable disulfide formation protein (135 aa).

Residues 7–26 form a helical membrane-spanning segment; it reads SYCLYFAWLVSCIGTLMSVY. The cysteines at positions 36 and 39 are disulfide-linked. The next 2 membrane-spanning stretches (helical) occupy residues 41–60 and 67–84; these read YQRICLFPLVVILGISAYLD and YALPLALIGFCIAIYQVC. Residues Cys96 and Cys101 are joined by a disulfide bond. Residues 109–131 traverse the membrane as a helical segment; it reads GFITMPMASALAFFAIANLLIFA.

Belongs to the DsbB family. BdbC subfamily.

It localises to the cell inner membrane. In terms of biological role, required for disulfide bond formation in some proteins. In Chlamydia muridarum (strain MoPn / Nigg), this protein is Probable disulfide formation protein.